Here is a 372-residue protein sequence, read N- to C-terminus: MTAQFPPPVPDTEQRLLSHEELEAALRDIGARRYHNLHPFHRLLHDGKLSKDQVRAWALNRYYYQAMIPVKDAALLARLPDAQLRRIWRQRIVDHDGDHEGDGGIERWLKLAEGVGFTRDYVLSTKGILSATRFSVDAYVHFVSERSLLEAIASSLTEMFSPTIISERVAGMLKNYDFITKDTLAYFDKRLTQAPRDADFALDYVKRHATTPEMQRAAIDALTFKCNVLWTQLDALYFAYVAPGMVPPDAWQPGEGLVAETNSAEDSPAAAASPAATTAEPTAFSGSDVPRLPRGVRLRFDEVRNKHVLLAPERTFDLDDNAVAVLKLVDGRNTVSQIAQILGQTYDADPAIIEADILPMLAGLAQKRVLER.

A pqqC region spans residues 1 to 267 (MTAQFPPPVP…VAETNSAEDS (267 aa)). The interval 260–288 (ETNSAEDSPAAAASPAATTAEPTAFSGSD) is disordered. Residues 264–283 (AEDSPAAAASPAATTAEPTA) show a composition bias toward low complexity. The linker stretch occupies residues 268–280 (PAAAASPAATTAE). The segment at 281–372 (PTAFSGSDVP…GLAQKRVLER (92 aa)) is pqqD.

This sequence in the N-terminal section; belongs to the PqqC family. It in the C-terminal section; belongs to the PqqD family. In terms of assembly, monomer. Interacts with PqqE.

The enzyme catalyses 6-(2-amino-2-carboxyethyl)-7,8-dioxo-1,2,3,4,7,8-hexahydroquinoline-2,4-dicarboxylate + 3 O2 = pyrroloquinoline quinone + 2 H2O2 + 2 H2O + H(+). Its pathway is cofactor biosynthesis; pyrroloquinoline quinone biosynthesis. The PqqC region is involved in ring cyclization and eight-electron oxidation of 3a-(2-amino-2-carboxyethyl)-4,5-dioxo-4,5,6,7,8,9-hexahydroquinoline-7,9-dicarboxylic-acid to PQQ. In terms of biological role, the PqqD region functions as a PqqA binding domain and presents PqqA to PqqE. The polypeptide is Bifunctional coenzyme PQQ synthesis protein C/D (pqqCD) (Methylorubrum extorquens (strain ATCC 14718 / DSM 1338 / JCM 2805 / NCIMB 9133 / AM1) (Methylobacterium extorquens)).